A 122-amino-acid chain; its full sequence is Small ribosomal subunit protein uS13 (122 aa).

Positions 95 to 122 are disordered; it reads GLPVRGQRTHTNARTRKGPAKPIAGKKK.

It belongs to the universal ribosomal protein uS13 family. In terms of assembly, part of the 30S ribosomal subunit. Forms a loose heterodimer with protein S19. Forms two bridges to the 50S subunit in the 70S ribosome.

Its function is as follows. Located at the top of the head of the 30S subunit, it contacts several helices of the 16S rRNA. In the 70S ribosome it contacts the 23S rRNA (bridge B1a) and protein L5 of the 50S subunit (bridge B1b), connecting the 2 subunits; these bridges are implicated in subunit movement. Contacts the tRNAs in the A and P-sites. The sequence is that of Small ribosomal subunit protein uS13 from Caulobacter vibrioides (strain ATCC 19089 / CIP 103742 / CB 15) (Caulobacter crescentus).